The following is a 184-amino-acid chain: ATP synthase subunit b (184 aa).

A helical membrane pass occupies residues 16 to 36 (LIPPIPELVIGLIAFVIVFGF).

The protein belongs to the ATPase B chain family. F-type ATPases have 2 components, F(1) - the catalytic core - and F(0) - the membrane proton channel. F(1) has five subunits: alpha(3), beta(3), gamma(1), delta(1), epsilon(1). F(0) has three main subunits: a(1), b(2) and c(10-14). The alpha and beta chains form an alternating ring which encloses part of the gamma chain. F(1) is attached to F(0) by a central stalk formed by the gamma and epsilon chains, while a peripheral stalk is formed by the delta and b chains.

Its subcellular location is the cell membrane. Its function is as follows. F(1)F(0) ATP synthase produces ATP from ADP in the presence of a proton or sodium gradient. F-type ATPases consist of two structural domains, F(1) containing the extramembraneous catalytic core and F(0) containing the membrane proton channel, linked together by a central stalk and a peripheral stalk. During catalysis, ATP synthesis in the catalytic domain of F(1) is coupled via a rotary mechanism of the central stalk subunits to proton translocation. Functionally, component of the F(0) channel, it forms part of the peripheral stalk, linking F(1) to F(0). In Streptomyces coelicolor (strain ATCC BAA-471 / A3(2) / M145), this protein is ATP synthase subunit b.